The chain runs to 164 residues: Methanogen homoaconitase small subunit 2 (164 aa).

The YLRT motif lies at 26–29 (YLRT).

The protein belongs to the LeuD family. LeuD type 2 subfamily. In terms of assembly, heterotetramer of 2 HacA and 2 HacB proteins. Cannot form a complex with LeuC.

It carries out the reaction (2R)-homocitrate = (2R,3S)-homoisocitrate. The catalysed reaction is (2R)-homocitrate = cis-homoaconitate + H2O. The enzyme catalyses (2R,3S)-homoisocitrate = cis-homoaconitate + H2O. It catalyses the reaction cis-(homo)2aconitate + H2O = (2R,3S)-iso(homo)2citrate. It carries out the reaction cis-(homo)3aconitate + H2O = (2R,3S)-iso(homo)3citrate. It participates in organic acid metabolism; 2-oxosuberate biosynthesis. In terms of biological role, component of a hydro-lyase with broad substrate specificity for cis-unsaturated tricarboxylic acids. Catalyzes both the reversible dehydration of (R)-homocitrate ((R)-2-hydroxybutane-1,2,4-tricarboxylate) to produce cis-homoaconitate ((Z)-but-1-ene-1,2,4-tricarboxylate), and its hydration to homoisocitrate ((1R,2S)-1-hydroxybutane-1,2,4-tricarboxylate). Is also able to hydrate the analogous longer chain substrates cis-homo(2)-aconitate, cis-homo(3)-aconitate. These reactions are part of the biosynthesis pathway of coenzyme B. This Methanosarcina acetivorans (strain ATCC 35395 / DSM 2834 / JCM 12185 / C2A) protein is Methanogen homoaconitase small subunit 2 (hacB2).